The primary structure comprises 111 residues: Cytochrome c (111 aa).

At Ala1 the chain carries N-acetylalanine. Cys22, Cys25, and His26 together coordinate heme c. Lys80 carries the post-translational modification N6,N6,N6-trimethyllysine. Met88 contributes to the heme c binding site. N6,N6,N6-trimethyllysine is present on Lys94.

The protein belongs to the cytochrome c family. In terms of processing, binds 1 heme c group covalently per subunit.

It localises to the mitochondrion intermembrane space. Electron carrier protein. The oxidized form of the cytochrome c heme group can accept an electron from the heme group of the cytochrome c1 subunit of cytochrome reductase. Cytochrome c then transfers this electron to the cytochrome oxidase complex, the final protein carrier in the mitochondrial electron-transport chain. The polypeptide is Cytochrome c (Brassica napus (Rape)).